The following is a 252-amino-acid chain: Probable transcriptional regulatory protein Fnod_1106 (252 aa).

This sequence belongs to the TACO1 family.

The protein localises to the cytoplasm. This Fervidobacterium nodosum (strain ATCC 35602 / DSM 5306 / Rt17-B1) protein is Probable transcriptional regulatory protein Fnod_1106.